We begin with the raw amino-acid sequence, 90 residues long: Probable small nuclear ribonucleoprotein E (90 aa).

Positions 14-89 (VNLIFRYLQN…ITLIHAAQQE (76 aa)) constitute a Sm domain.

This sequence belongs to the snRNP Sm proteins family. As to quaternary structure, core component of the spliceosomal U1, U2, U4 and U5 small nuclear ribonucleoproteins (snRNPs), the building blocks of the spliceosome.

Its subcellular location is the nucleus. The protein localises to the cytoplasm. It is found in the cytosol. Functionally, plays a role in pre-mRNA splicing as a core component of the spliceosomal U1, U2, U4 and U5 small nuclear ribonucleoproteins (snRNPs), the building blocks of the spliceosome. This chain is Probable small nuclear ribonucleoprotein E (snr-6), found in Caenorhabditis elegans.